Consider the following 238-residue polypeptide: Probable transcriptional regulatory protein M6_Spy0297 (238 aa).

The protein belongs to the TACO1 family. YeeN subfamily.

It localises to the cytoplasm. This chain is Probable transcriptional regulatory protein M6_Spy0297, found in Streptococcus pyogenes serotype M6 (strain ATCC BAA-946 / MGAS10394).